The sequence spans 345 residues: Uroporphyrinogen decarboxylase (345 aa).

Residues R27–R31, F46, D76, Y152, S207, and H320 contribute to the substrate site.

The protein belongs to the uroporphyrinogen decarboxylase family. As to quaternary structure, homodimer.

The protein localises to the cytoplasm. It carries out the reaction uroporphyrinogen III + 4 H(+) = coproporphyrinogen III + 4 CO2. It participates in porphyrin-containing compound metabolism; protoporphyrin-IX biosynthesis; coproporphyrinogen-III from 5-aminolevulinate: step 4/4. In terms of biological role, catalyzes the decarboxylation of four acetate groups of uroporphyrinogen-III to yield coproporphyrinogen-III. This chain is Uroporphyrinogen decarboxylase, found in Geobacillus thermodenitrificans (strain NG80-2).